The primary structure comprises 342 residues: Phosphoribosylformylglycinamidine cyclo-ligase (342 aa).

The protein belongs to the AIR synthase family.

The protein resides in the cytoplasm. It carries out the reaction 2-formamido-N(1)-(5-O-phospho-beta-D-ribosyl)acetamidine + ATP = 5-amino-1-(5-phospho-beta-D-ribosyl)imidazole + ADP + phosphate + H(+). The protein operates within purine metabolism; IMP biosynthesis via de novo pathway; 5-amino-1-(5-phospho-D-ribosyl)imidazole from N(2)-formyl-N(1)-(5-phospho-D-ribosyl)glycinamide: step 2/2. In Staphylococcus aureus (strain MSSA476), this protein is Phosphoribosylformylglycinamidine cyclo-ligase.